The following is a 141-amino-acid chain: Drosulfakinins (141 aa).

Residues 1–33 form the signal peptide; that stretch reads MGLRSCTHLATLFMTLWALAFCFLVVVPIPAQT. The propeptide occupies 34–73; that stretch reads TSLQNAKDDRRLQELESKIGAESDQPNANLVGPSFSRFGD. The interval 51 to 72 is disordered; that stretch reads KIGAESDQPNANLVGPSFSRFG. Phe-82 carries the phenylalanine amide modification. A propeptide spanning residues 86–111 is cleaved from the precursor; sequence VPLISRPMIPIELDLLMDNDDERTKA. Sulfotyrosine is present on Tyr-117. A Phenylalanine amide modification is found at Phe-122. Tyr-134 carries the post-translational modification Sulfotyrosine. Phe-139 bears the Phenylalanine amide mark.

It belongs to the gastrin/cholecystokinin family.

The protein resides in the secreted. Drosulfakinin-0 (DSK 0) plays diverse biological roles including regulating gut muscle contraction in adults but not in larvae. This is Drosulfakinins from Drosophila mauritiana (Fruit fly).